A 624-amino-acid chain; its full sequence is Cell pattern formation-associated protein ust1 (624 aa).

Disordered regions lie at residues 1–24 (MSTA…APTG) and 43–99 (RSGS…GHSS). Positions 43–62 (RSGSVPASASGSAPGSASGS) are enriched in low complexity. Over residues 70-85 (QHHTGHHHYSAHHTHS) the composition is skewed to basic residues. Residues 233–339 (RVTTTLWEDE…PNIQSFLYHP (107 aa)) enclose the HTH APSES-type domain. The H-T-H motif DNA-binding region spans 267-288 (GTKLLNVCGMSRGKRDGILKNE). The span at 352-362 (AQERQAQRQRA) shows a compositional bias: low complexity. 3 disordered regions span residues 352 to 456 (AQER…QQQQ), 474 to 504 (QQAY…LNNS), and 538 to 624 (SWND…IHHE). Over residues 369 to 391 (PGANGTSQAPPLMRANTTPSNGD) the composition is skewed to polar residues. The segment covering 392-426 (TSTFSSGLSSLGSWTGSHDQGHASAPTTAQPSPSS) has biased composition (low complexity). The span at 427-451 (MHNGATQMHMSLSNHGTASPTYAQS) shows a compositional bias: polar residues. Residues 571–587 (LDGDDLHSPDSSDDRLA) are compositionally biased toward basic and acidic residues. Residues 615-624 (VGNGSGIHHE) show a composition bias toward gly residues.

Belongs to the EFG1/PHD1/stuA family. Phosphorylated but is not a target of cAMP signaling.

It localises to the nucleus. In terms of biological role, transcription factor that regulates asexual reproduction. Binds the StuA-response elements (StRE) with the consensus sequence 5'-(A/T)CGCG(T/A)N(A/C)-3' at the promoters of target genes. Regulates dimorphism, virulence, and the sporulation program. Required for mating, gall induction, and sporogenesis in maize tissue. Regulates expression of the filament-down-regulated gene UM00205 and the teliospore-specific gene ssp1. This Mycosarcoma maydis (Corn smut fungus) protein is Cell pattern formation-associated protein ust1 (ust1).